The sequence spans 430 residues: MVAGKLYTYPENFRAFKALIAAQYSGAKLEIAKSFVFGETNKSDAFLKSFPLGKVPAFESADGHCIAESNAIAYYVANETLRGSSDLEKAQIIQWMTFADTEILPASCTWVFPVLGIMQFNKQATARAKEDIDKALQALDDHLLTRTYLVGERITLADIVVTCTLLHLYQHVLDEAFRKSYVNTNRWFITLINQKQVKAVIGDFKLCEKAGEFDPKKYAEFQAAIGSGEKKKTEKAPKAVKAKPEKKEVPKKEQEEPADAAEEALAAEPKSKDPFDEMPKGTFNMDDFKRFYSNNEETKSIPYFWEKFDKENYSIWYSEYKYQDELAKVYMSCNLITGMFQRIEKMRKQAFASVCVFGEDNDSSISGIWVWRGQDLAFKLSPDWQIDYESYDWKKLDPDAQETKDLVTQYFTWTGTDKQGRKFNQGKIFK.

Residues Val-2–Ser-84 enclose the GST N-terminal domain. Residues Ser-85–Phe-213 form the GST C-terminal domain. 2 stretches are compositionally biased toward basic and acidic residues: residues Lys-232 to Glu-255 and Pro-269 to Met-278. The interval Lys-232–Met-278 is disordered. Residues Ser-271–Lys-430 form the EF-1-gamma C-terminal domain.

As to quaternary structure, EF-1 is composed of four subunits: alpha, beta, delta, and gamma.

In terms of biological role, probably plays a role in anchoring the complex to other cellular components. In Artemia salina (Brine shrimp), this protein is Elongation factor 1-gamma.